The sequence spans 361 residues: Holliday junction branch migration complex subunit RuvB (361 aa).

Residues 1–181 (MKDQRLLDSV…FGIPIRLNFY (181 aa)) are large ATPase domain (RuvB-L). ATP is bound by residues Leu20, Arg21, Gly62, Lys65, Thr66, Thr67, 128–130 (EDY), Arg171, Tyr181, and Arg218. Mg(2+) is bound at residue Thr66. The small ATPAse domain (RuvB-S) stretch occupies residues 182 to 252 (TIEELEYIVQ…VADEALSRLE (71 aa)). A head domain (RuvB-H) region spans residues 255–361 (HLGLDPLDRR…QTTLWDEADE (107 aa)). Positions 291, 310, and 315 each coordinate DNA.

Belongs to the RuvB family. Homohexamer. Forms an RuvA(8)-RuvB(12)-Holliday junction (HJ) complex. HJ DNA is sandwiched between 2 RuvA tetramers; dsDNA enters through RuvA and exits via RuvB. An RuvB hexamer assembles on each DNA strand where it exits the tetramer. Each RuvB hexamer is contacted by two RuvA subunits (via domain III) on 2 adjacent RuvB subunits; this complex drives branch migration. In the full resolvosome a probable DNA-RuvA(4)-RuvB(12)-RuvC(2) complex forms which resolves the HJ.

Its subcellular location is the cytoplasm. The enzyme catalyses ATP + H2O = ADP + phosphate + H(+). Functionally, the RuvA-RuvB-RuvC complex processes Holliday junction (HJ) DNA during genetic recombination and DNA repair, while the RuvA-RuvB complex plays an important role in the rescue of blocked DNA replication forks via replication fork reversal (RFR). RuvA specifically binds to HJ cruciform DNA, conferring on it an open structure. The RuvB hexamer acts as an ATP-dependent pump, pulling dsDNA into and through the RuvAB complex. RuvB forms 2 homohexamers on either side of HJ DNA bound by 1 or 2 RuvA tetramers; 4 subunits per hexamer contact DNA at a time. Coordinated motions by a converter formed by DNA-disengaged RuvB subunits stimulates ATP hydrolysis and nucleotide exchange. Immobilization of the converter enables RuvB to convert the ATP-contained energy into a lever motion, pulling 2 nucleotides of DNA out of the RuvA tetramer per ATP hydrolyzed, thus driving DNA branch migration. The RuvB motors rotate together with the DNA substrate, which together with the progressing nucleotide cycle form the mechanistic basis for DNA recombination by continuous HJ branch migration. Branch migration allows RuvC to scan DNA until it finds its consensus sequence, where it cleaves and resolves cruciform DNA. The protein is Holliday junction branch migration complex subunit RuvB of Bartonella quintana (strain Toulouse) (Rochalimaea quintana).